Consider the following 144-residue polypeptide: UPF0735 ACT domain-containing protein LCABL_12100 (144 aa).

The ACT domain occupies 68–143 (VISLMLHHDR…GVSDVHLVSV (76 aa)).

It belongs to the UPF0735 family.

The chain is UPF0735 ACT domain-containing protein LCABL_12100 from Lacticaseibacillus casei (strain BL23) (Lactobacillus casei).